The following is a 271-amino-acid chain: Solute carrier family 66 member 2 (271 aa).

3 helical membrane passes run 7-27 (GWLL…AMVF), 49-69 (FSTH…LFWF), and 72-92 (HFES…LLML). The PQ-loop 1 domain occupies 14-80 (HQLVSWVAAG…RHFESPLLWQ (67 aa)). Ser-110 is modified (phosphoserine). 3 helical membrane passes run 143–163 (FADY…ITYL), 168–188 (ALFV…LGVP), and 232–252 (VCGL…YAFA). Residues 149–215 (CVLAFTGVAG…MVLMWTSGDT (67 aa)) form the PQ-loop 2 domain.

Its subcellular location is the membrane. This chain is Solute carrier family 66 member 2 (Slc66a2), found in Rattus norvegicus (Rat).